The chain runs to 150 residues: Large ribosomal subunit protein uL13 (150 aa).

It belongs to the universal ribosomal protein uL13 family. Part of the 50S ribosomal subunit.

This protein is one of the early assembly proteins of the 50S ribosomal subunit, although it is not seen to bind rRNA by itself. It is important during the early stages of 50S assembly. This Chlamydia caviae (strain ATCC VR-813 / DSM 19441 / 03DC25 / GPIC) (Chlamydophila caviae) protein is Large ribosomal subunit protein uL13.